We begin with the raw amino-acid sequence, 472 residues long: MASKGKVTQVIGAVVDVQFEDGLPAILNALETTNNGKRLVLEVAQHLGENTVRTIAMDATEGLVRGAAVSDTGGPITVPVGNATLGRILNVIGEPVDERGDVSKAEARAIHQPAPDFAAQSTESQILVTGIKVIDLLAPYSKGGKIGLFGGAGVGKTVLIMELINNIAKVHSGFSVFAGVGERTREGNDLYHEMIESGVINLEKLEESKVALVYGQMNEPPGARARVALTGLTLAEQFRDQSGTDVLFFVDNIFRFTQAGSEVSALLGRIPSAVGYQPTLATDMGALQERITSTKAGSITSVQAIYVPADDLTDPAPATSFAHLDATTVLSRAISELGIYPAVDPLDSTSRILDPQVVGEEHYQVARDVQGMLQRYKSLQDIIAILGMDELSEEDKLTVARARKIQRFLSQPFDVAKVFTGSDGVQVPLEDTIKSFKAVVAGEYDHLPEAAFYMVGGIDDVIAKAQRLAAAA.

150 to 157 (GGAGVGKT) is a binding site for ATP.

This sequence belongs to the ATPase alpha/beta chains family. F-type ATPases have 2 components, CF(1) - the catalytic core - and CF(0) - the membrane proton channel. CF(1) has five subunits: alpha(3), beta(3), gamma(1), delta(1), epsilon(1). CF(0) has four main subunits: a, b, b' and c.

The protein resides in the cellular chromatophore membrane. It catalyses the reaction ATP + H2O + 4 H(+)(in) = ADP + phosphate + 5 H(+)(out). Its function is as follows. Produces ATP from ADP in the presence of a proton gradient across the membrane. The catalytic sites are hosted primarily by the beta subunits. In Rhodobacter capsulatus (Rhodopseudomonas capsulata), this protein is ATP synthase subunit beta.